The sequence spans 289 residues: Shikimate dehydrogenase (NADP(+)) (289 aa).

Shikimate is bound by residues 20 to 22 (SIS) and Ser67. The active-site Proton acceptor is the Lys71. 2 residues coordinate shikimate: Asn92 and Asp107. NADP(+) is bound by residues 132 to 136 (GGGGA) and Val230. Position 232 (Tyr232) interacts with shikimate. Gly253 provides a ligand contact to NADP(+).

It belongs to the shikimate dehydrogenase family. In terms of assembly, homodimer.

The enzyme catalyses shikimate + NADP(+) = 3-dehydroshikimate + NADPH + H(+). It functions in the pathway metabolic intermediate biosynthesis; chorismate biosynthesis; chorismate from D-erythrose 4-phosphate and phosphoenolpyruvate: step 4/7. In terms of biological role, involved in the biosynthesis of the chorismate, which leads to the biosynthesis of aromatic amino acids. Catalyzes the reversible NADPH linked reduction of 3-dehydroshikimate (DHSA) to yield shikimate (SA). The polypeptide is Shikimate dehydrogenase (NADP(+)) (Streptococcus mutans serotype c (strain ATCC 700610 / UA159)).